The primary structure comprises 351 residues: E3 ubiquitin-protein ligase TRIM63 (351 aa).

The RING-type zinc-finger motif lies at 23–79 (CPICLEMFTKPVVILPCQHNLCRKCANDIFQAANPYWTNRGGSVSMSGGRFRCPSCR). The interval 74-218 (RCPSCRHEVI…LSHKFDALYA (145 aa)) is interaction with TTN. A B box-type zinc finger spans residues 117–159 (GSHPMCKEHEDEKINIYCLTCEVPTCSLCKVFGAHQACEVAPL). Residues C122, H125, C145, and H151 each contribute to the Zn(2+) site. The stretch at 189 to 269 (SQLEDSCRVT…VETAIQSLDE (81 aa)) forms a coiled coil. One can recognise a COS domain in the interval 267-325 (LDEPGGATFLLSAKPLIKSIVEASKGCQLGKTEQGFENMDYFTLNLEHIAEALRAIDFG). The span at 326-345 (TDEEEEFTEEEEEEDQEEGV) shows a compositional bias: acidic residues. The disordered stretch occupies residues 326–351 (TDEEEEFTEEEEEEDQEEGVSTEGHQ).

In terms of assembly, homodimer. Homooligomer and heterooligomer. Interacts with SUMO2, titin/TTN and GMEB1. Interacts with TRIM54 and probably with TRIM55 and TNNI3. Forms a ternary complex with RACK1 and PRKCE. Interacts with CKM. As to expression, muscle specific. Selectively expressed in heart and skeletal muscle.

It localises to the cytoplasm. It is found in the nucleus. The protein localises to the myofibril. The protein resides in the sarcomere. Its subcellular location is the m line. It localises to the z line. It catalyses the reaction S-ubiquitinyl-[E2 ubiquitin-conjugating enzyme]-L-cysteine + [acceptor protein]-L-lysine = [E2 ubiquitin-conjugating enzyme]-L-cysteine + N(6)-ubiquitinyl-[acceptor protein]-L-lysine.. Its pathway is protein modification; protein ubiquitination. In terms of biological role, E3 ubiquitin ligase. Mediates the ubiquitination and subsequent proteasomal degradation of CKM, GMEB1 and HIBADH. Regulates the proteasomal degradation of muscle proteins under amino acid starvation, where muscle protein is catabolized to provide other organs with amino acids. Inhibits de novo skeletal muscle protein synthesis under amino acid starvation. Regulates proteasomal degradation of cardiac troponin I/TNNI3 and probably of other sarcomeric-associated proteins. May play a role in striated muscle atrophy and hypertrophy by regulating an anti-hypertrophic PKC-mediated signaling pathway. May regulate the organization of myofibrils through TTN in muscle cells. The sequence is that of E3 ubiquitin-protein ligase TRIM63 (Trim63) from Rattus norvegicus (Rat).